Consider the following 348-residue polypeptide: L-seryl-tRNA(Sec) kinase (348 aa).

25-32 contributes to the ATP binding site; it reads GLPAAGKS.

It belongs to the L-seryl-tRNA(Sec) kinase family. It depends on Mg(2+) as a cofactor.

The catalysed reaction is L-seryl-tRNA(Sec) + ATP = O-phospho-L-seryl-tRNA(Sec) + ADP. It participates in aminoacyl-tRNA biosynthesis; selenocysteinyl-tRNA(Sec) biosynthesis; selenocysteinyl-tRNA(Sec) from L-seryl-tRNA(Sec) (archaeal/eukaryal route): step 1/2. Functionally, specifically phosphorylates seryl-tRNA(Sec) to O-phosphoseryl-tRNA(Sec), an activated intermediate for selenocysteine biosynthesis. This Homo sapiens (Human) protein is L-seryl-tRNA(Sec) kinase (PSTK).